The sequence spans 374 residues: Alanine racemase (374 aa).

The Proton acceptor; specific for D-alanine role is filled by Lys-35. Residue Lys-35 is modified to N6-(pyridoxal phosphate)lysine. Arg-133 serves as a coordination point for substrate. The Proton acceptor; specific for L-alanine role is filled by Tyr-261. A substrate-binding site is contributed by Met-315.

It belongs to the alanine racemase family. Pyridoxal 5'-phosphate is required as a cofactor.

The enzyme catalyses L-alanine = D-alanine. Its pathway is amino-acid biosynthesis; D-alanine biosynthesis; D-alanine from L-alanine: step 1/1. Its function is as follows. Catalyzes the interconversion of L-alanine and D-alanine. May also act on other amino acids. The chain is Alanine racemase (alr) from Psychrobacter sp. (strain PRwf-1).